A 170-amino-acid polypeptide reads, in one-letter code: Adenine phosphoribosyltransferase (170 aa).

Belongs to the purine/pyrimidine phosphoribosyltransferase family. In terms of assembly, homodimer.

It localises to the cytoplasm. The enzyme catalyses AMP + diphosphate = 5-phospho-alpha-D-ribose 1-diphosphate + adenine. Its pathway is purine metabolism; AMP biosynthesis via salvage pathway; AMP from adenine: step 1/1. Catalyzes a salvage reaction resulting in the formation of AMP, that is energically less costly than de novo synthesis. This is Adenine phosphoribosyltransferase from Bacillus cereus (strain G9842).